An 851-amino-acid chain; its full sequence is Beta-galactosidase 3 (851 aa).

The first 29 residues, 1–29 (MAGASSYFSLRRLLLLLLPLVPLLGATTA), serve as a signal peptide directing secretion. An N-linked (GlcNAc...) asparagine glycan is attached at Asn-35. The active-site Proton donor is the Glu-194. Glu-263 (nucleophile) is an active-site residue. N-linked (GlcNAc...) asparagine glycans are attached at residues Asn-361, Asn-475, Asn-528, and Asn-533. The 87-residue stretch at 765 to 851 (GRDAAKVQLS…KTLAIEADCS (87 aa)) folds into the SUEL-type lectin domain.

Belongs to the glycosyl hydrolase 35 family.

The protein resides in the secreted. It localises to the extracellular space. It is found in the apoplast. It catalyses the reaction Hydrolysis of terminal non-reducing beta-D-galactose residues in beta-D-galactosides.. The protein is Beta-galactosidase 3 of Oryza sativa subsp. japonica (Rice).